A 110-amino-acid polypeptide reads, in one-letter code: Phosphoribosyl-AMP cyclohydrolase (110 aa).

Residue Asp-74 participates in Mg(2+) binding. A Zn(2+)-binding site is contributed by Cys-75. Asp-76 and Asp-78 together coordinate Mg(2+). 2 residues coordinate Zn(2+): Cys-91 and Cys-98.

The protein belongs to the PRA-CH family. As to quaternary structure, homodimer. The cofactor is Mg(2+). It depends on Zn(2+) as a cofactor.

The protein resides in the cytoplasm. The catalysed reaction is 1-(5-phospho-beta-D-ribosyl)-5'-AMP + H2O = 1-(5-phospho-beta-D-ribosyl)-5-[(5-phospho-beta-D-ribosylamino)methylideneamino]imidazole-4-carboxamide. It participates in amino-acid biosynthesis; L-histidine biosynthesis; L-histidine from 5-phospho-alpha-D-ribose 1-diphosphate: step 3/9. In terms of biological role, catalyzes the hydrolysis of the adenine ring of phosphoribosyl-AMP. The sequence is that of Phosphoribosyl-AMP cyclohydrolase from Lacticaseibacillus casei (strain BL23) (Lactobacillus casei).